We begin with the raw amino-acid sequence, 457 residues long: Cytochrome b-c1 complex subunit 1, mitochondrial (457 aa).

The transit peptide at 1-26 (MLRTVTSKTVSNQFKRSLATAVATPK) directs the protein to the mitochondrion.

This sequence belongs to the peptidase M16 family. UQCRC1/QCR1 subfamily. Component of the ubiquinol-cytochrome c oxidoreductase (cytochrome b-c1 complex, complex III, CIII), a multisubunit enzyme composed of 10 subunits. The complex is composed of 3 respiratory subunits cytochrome b (COB), cytochrome c1 (CYT1) and Rieske protein (RIP1), 2 core protein subunits COR1 and QCR2, and 5 low-molecular weight protein subunits QCR6, QCR7, QCR8, QCR9 and QCR10. The complex exists as an obligatory dimer and forms supercomplexes (SCs) in the inner mitochondrial membrane with a monomer or a dimer of cytochrome c oxidase (complex IV, CIV), resulting in 2 different assemblies (supercomplexes III(2)IV and III(2)IV(2)). COR1 interacts with COX5A at the CIII-CIV interface.

Its subcellular location is the mitochondrion inner membrane. Component of the ubiquinol-cytochrome c oxidoreductase, a multisubunit transmembrane complex that is part of the mitochondrial electron transport chain which drives oxidative phosphorylation. The respiratory chain contains 3 multisubunit complexes succinate dehydrogenase (complex II, CII), ubiquinol-cytochrome c oxidoreductase (cytochrome b-c1 complex, complex III, CIII) and cytochrome c oxidase (complex IV, CIV), that cooperate to transfer electrons derived from NADH and succinate to molecular oxygen, creating an electrochemical gradient over the inner membrane that drives transmembrane transport and the ATP synthase. The cytochrome b-c1 complex catalyzes electron transfer from ubiquinol to cytochrome c, linking this redox reaction to translocation of protons across the mitochondrial inner membrane, with protons being carried across the membrane as hydrogens on the quinol. In the process called Q cycle, 2 protons are consumed from the matrix, 4 protons are released into the intermembrane space and 2 electrons are passed to cytochrome c. In Saccharomyces cerevisiae (strain ATCC 204508 / S288c) (Baker's yeast), this protein is Cytochrome b-c1 complex subunit 1, mitochondrial (COR1).